Consider the following 324-residue polypeptide: UDP-N-acetylenolpyruvoylglucosamine reductase (324 aa).

In terms of domain architecture, FAD-binding PCMH-type spans 38 to 217; the sequence is AGGLAELMFQ…IRAEMDAVRQ (180 aa). The active site involves R183. S232 acts as the Proton donor in catalysis. The active site involves E302.

This sequence belongs to the MurB family. FAD is required as a cofactor.

It is found in the cytoplasm. It carries out the reaction UDP-N-acetyl-alpha-D-muramate + NADP(+) = UDP-N-acetyl-3-O-(1-carboxyvinyl)-alpha-D-glucosamine + NADPH + H(+). Its pathway is cell wall biogenesis; peptidoglycan biosynthesis. In terms of biological role, cell wall formation. This chain is UDP-N-acetylenolpyruvoylglucosamine reductase, found in Allorhizobium ampelinum (strain ATCC BAA-846 / DSM 112012 / S4) (Agrobacterium vitis (strain S4)).